Here is a 354-residue protein sequence, read N- to C-terminus: FAD synthetase 1, chloroplastic (354 aa).

A chloroplast-targeting transit peptide spans 1 to 75 (MLCGGSRASV…SQGDDHPELS (75 aa)). Positions 228–248 (SVNTEEEDSKSKERGQVSSTR) are disordered.

It depends on Mg(2+) as a cofactor.

Its subcellular location is the plastid. The protein resides in the chloroplast. It catalyses the reaction FMN + ATP + H(+) = FAD + diphosphate. It participates in cofactor biosynthesis; FAD biosynthesis; FAD from FMN: step 1/1. In terms of biological role, catalyzes the adenylation of flavin mononucleotide (FMN) to form flavin adenine dinucleotide (FAD) coenzyme. The protein is FAD synthetase 1, chloroplastic of Arabidopsis thaliana (Mouse-ear cress).